We begin with the raw amino-acid sequence, 210 residues long: Orotate phosphoribosyltransferase (210 aa).

Residues R94, K98, H100, and 120–128 each bind 5-phospho-alpha-D-ribose 1-diphosphate; that span reads EDLISTGGS. Orotate is bound at residue S124.

It belongs to the purine/pyrimidine phosphoribosyltransferase family. PyrE subfamily. In terms of assembly, homodimer. The cofactor is Mg(2+).

The catalysed reaction is orotidine 5'-phosphate + diphosphate = orotate + 5-phospho-alpha-D-ribose 1-diphosphate. It participates in pyrimidine metabolism; UMP biosynthesis via de novo pathway; UMP from orotate: step 1/2. Its function is as follows. Catalyzes the transfer of a ribosyl phosphate group from 5-phosphoribose 1-diphosphate to orotate, leading to the formation of orotidine monophosphate (OMP). The sequence is that of Orotate phosphoribosyltransferase from Bacillus cereus (strain G9842).